The primary structure comprises 556 residues: Sesquiterpene synthase 2 (556 aa).

4 residues coordinate Mg(2+): D309, D313, D453, and E461. The short motif at 309–313 (DDIYD) is the DDXXD motif element.

This sequence belongs to the terpene synthase family. Tpsa subfamily. Mg(2+) is required as a cofactor. Requires Mn(2+) as cofactor. In terms of tissue distribution, mostly expressed in roots and mature leaflets and, to a lower extent, in rachis and developing leaflets.

It catalyses the reaction (2E,6E)-farnesyl diphosphate = alpha-humulene + diphosphate. It carries out the reaction (2E,6E)-farnesyl diphosphate = alpha-selinene + diphosphate. The enzyme catalyses (2E,6E)-farnesyl diphosphate = delta-cadinene + diphosphate. The catalysed reaction is (2E,6E)-farnesyl diphosphate = (1S,2S,4R)-beta-elemene + diphosphate. Its pathway is secondary metabolite biosynthesis; terpenoid biosynthesis. Its function is as follows. Sesquiterpene synthase involved in the biosynthesis of volatile compounds known for their medicinal efficacy for treating enteritis, dysentery, itch and some cancers. Mediates the conversion of (2E,6E)-farnesyl diphosphate (FPP) into beta-elemene, alpha-humulene, delta-cadinene and alpha-selinene. The protein is Sesquiterpene synthase 2 of Toona sinensis (Chinese mahogany).